A 1124-amino-acid chain; its full sequence is MSRYVQRPENALKRANEFIDVGKKARALDTLQEVFRAKKWNYNWSESIIEPVMFKYLDLCVELKKSHIAKEGLFQYRNMFQLVNVGSLENVIRGYLKMAEERTEQAQQQSSQATVDIDDLDNLATPESILMSAVCGEDAQDRSDRTILLPWVKFLWESYCQCLELLKVNSHCETLYHDIARMAFQFCLKYNRKMEFRKLCEKLRKHLEDICKVSSQTANVTISKPETQQLNLETRLHQLDSAIQMELWLEAYKAIEDIHGLMQLSKKTPLPKTMALYYTKLAMVFWKAGNQLFHASALLKLFQLSRDMKKNVTAEEIQRMTTHVLIATLAIPLPSAHPEFDRFIETDKSPMEKAQRLAFLLGLQQSPSRALLLKELIRLNVLQLAAPQFRHLYQLLEVEFDPLNLCDQVQKIVDEIEADPNSVYGQYIQALKDVTLVRLVRQISQVYQTIEFPRLLELAKFADYHHLERILVDCVRHNDMQITIDHRNECVHFGTDLSESQREDHPDGPTLQSMPSEQIRSQLVNMSVVLHRAIATINPNRKKAERERLRAQMVHQYEENADKEHQRILQRQKKIEDRKEYIERMNQEREEEELRLQEEQVRMQKLAEQRRLEAENEERERKRHENELQMMKERNMKEKIEQIKQTATGQKLLKKLDEEEIRKLNTEEIAAREAEERLKERKAHENNLKTQEKKIDYFERAKRLEEIPLIEKYLQDRSVQDKEFWEKQEAARIEAAIAERKNAEACQERLKRMLPDRDVYWQQLKNERGNQFAEKLKQFNQALEEERKRRLADRVVKRREERRMKWLKEKEEERRRIEEELRKQKEEADRIERERRAEERRIQDEKNRQLAEKQLAIAEEVERRRREELEQMKEADGRRERRPAAGPAEPKPEESWRKGPAAAAPANPAADEPKKNVWQGSGRYGPGPRERGGETGPKDKWRTGPEDHEKDGGGAGGMRRGGDMRRGQDDRGPIRRGGGEERGEREDRGPIRRGGGPGDAPAGTGTPRRDDRPGGWFNRDRRDDRRDDRRDDRRDDRRGDDRGPRGGGERGNTWRRGPADNADDNRRGPRDEGRQDTWRNTRQDAAPKQKEDRPQREARPAQENVPPRSNAGPDEEGWTDVKHR.

Positions 96 to 124 form a coiled coil; sequence LKMAEERTEQAQQQSSQATVDIDDLDNLA. One can recognise a PCI domain in the interval 317–498; sequence IQRMTTHVLI…ECVHFGTDLS (182 aa). Basic and acidic residues-rich tracts occupy residues 812–851 and 860–883; these read EERR…RQLA and EVER…ERRP. Residues 812-1124 are disordered; that stretch reads EERRRIEEEL…EEGWTDVKHR (313 aa). Positions 900–910 are enriched in low complexity; sequence PAAAAPANPAA. 4 stretches are compositionally biased toward basic and acidic residues: residues 928–952, 960–990, 1007–1048, and 1063–1100; these read PRER…EKDG, RGGD…DRGP, PRRD…RGGG, and DDNR…EARP.

Belongs to the eIF-3 subunit A family. In terms of assembly, component of the eukaryotic translation initiation factor 3 (eIF-3) complex.

It is found in the cytoplasm. RNA-binding component of the eukaryotic translation initiation factor 3 (eIF-3) complex, which is involved in protein synthesis of a specialized repertoire of mRNAs and, together with other initiation factors, stimulates binding of mRNA and methionyl-tRNAi to the 40S ribosome. The eIF-3 complex specifically targets and initiates translation of a subset of mRNAs involved in cell proliferation. The sequence is that of Eukaryotic translation initiation factor 3 subunit A from Anopheles gambiae (African malaria mosquito).